The following is a 636-amino-acid chain: uncharacterized protein (636 aa).

Positions Cys10 to Cys36 form a DNA-binding region, zn(2)-C6 fungal-type. The segment covering Asn556 to Ser580 has biased composition (polar residues). The tract at residues Asn556–Glu581 is disordered.

The protein localises to the cytoplasm. It is found in the nucleus. This is an uncharacterized protein from Schizosaccharomyces pombe (strain 972 / ATCC 24843) (Fission yeast).